The sequence spans 602 residues: Exo-poly-alpha-D-galacturonosidase (602 aa).

Positions 1-27 are cleaved as a signal peptide; the sequence is MKVITFSRRSALASIVATCLMSTPALA. Residues 32–149 enclose the Fibronectin type-III domain; that stretch reads APQKLQIPTL…TVTTTTTAVP (118 aa). Asp395 functions as the Proton donor in the catalytic mechanism. His428 is an active-site residue.

It belongs to the glycosyl hydrolase 28 family.

It is found in the secreted. The enzyme catalyses [(1-&gt;4)-alpha-D-galacturonosyl](n) + H2O = alpha-D-galacturonosyl-(1-&gt;4)-D-galacturonate + [(1-&gt;4)-alpha-D-galacturonosyl](n-2). Contributes significantly to bacterial utilization of polygalacturonate and the induction of pectate lyase in the presence of extracellular pectic polymers. In Dickeya chrysanthemi (Pectobacterium chrysanthemi), this protein is Exo-poly-alpha-D-galacturonosidase (pehX).